The sequence spans 343 residues: Globoside alpha-1,3-N-acetylgalactosaminyltransferase 1 (343 aa).

Over 1 to 6 the chain is Cytoplasmic; that stretch reads MISRKA. Residues 7–27 traverse the membrane as a helical; Signal-anchor for type II membrane protein segment; that stretch reads LGSLVCLSAVATLIWIASGNW. Residues 28-343 are Lumenal-facing; the sequence is KVHYLPYYLP…VDKNYQEVRN (316 aa). Asn104 is a glycosylation site (N-linked (GlcNAc...) asparagine). Substrate is bound by residues 112–117, 202–204, and 224–227; these read FAVGKY, DID, and HPGY. Mn(2+) contacts are provided by Asp202 and Asp204. The Nucleophile role is filled by Glu294.

It belongs to the glycosyltransferase 6 family. Mn(2+) is required as a cofactor.

The protein resides in the golgi apparatus membrane. The protein operates within protein modification; protein glycosylation. In terms of biological role, may catalyze the formation of some glycolipid via the addition of N-acetylgalactosamine (GalNAc) in alpha-1,3-linkage to some substrate. Glycolipids probably serve for adherence of some pathogens. The polypeptide is Globoside alpha-1,3-N-acetylgalactosaminyltransferase 1 (Gallus gallus (Chicken)).